A 428-amino-acid polypeptide reads, in one-letter code: Serine hydroxymethyltransferase (428 aa).

(6S)-5,6,7,8-tetrahydrofolate-binding positions include Leu-127 and 131 to 133 (GHL). Residue Lys-236 is modified to N6-(pyridoxal phosphate)lysine.

It belongs to the SHMT family. As to quaternary structure, homodimer. It depends on pyridoxal 5'-phosphate as a cofactor.

The protein localises to the cytoplasm. The catalysed reaction is (6R)-5,10-methylene-5,6,7,8-tetrahydrofolate + glycine + H2O = (6S)-5,6,7,8-tetrahydrofolate + L-serine. It functions in the pathway one-carbon metabolism; tetrahydrofolate interconversion. The protein operates within amino-acid biosynthesis; glycine biosynthesis; glycine from L-serine: step 1/1. Its function is as follows. Catalyzes the reversible interconversion of serine and glycine with tetrahydrofolate (THF) serving as the one-carbon carrier. This reaction serves as the major source of one-carbon groups required for the biosynthesis of purines, thymidylate, methionine, and other important biomolecules. Also exhibits THF-independent aldolase activity toward beta-hydroxyamino acids, producing glycine and aldehydes, via a retro-aldol mechanism. This chain is Serine hydroxymethyltransferase, found in Tropheryma whipplei (strain TW08/27) (Whipple's bacillus).